Here is a 256-residue protein sequence, read N- to C-terminus: Protein FixA (256 aa).

This sequence belongs to the ETF beta-subunit/FixA family. In terms of assembly, heterodimer of FixA and FixB.

It functions in the pathway amine and polyamine metabolism; carnitine metabolism. Required for anaerobic carnitine reduction. May bring reductant to CaiA. In Salmonella paratyphi A (strain ATCC 9150 / SARB42), this protein is Protein FixA.